A 230-amino-acid chain; its full sequence is Ribonuclease 3 (230 aa).

Residues 10 to 133 (DPRLQSRIGY…IIGAIYVDSN (124 aa)) enclose the RNase III domain. E46 contacts Mg(2+). D50 is an active-site residue. Residues D119 and E122 each coordinate Mg(2+). The active site involves E122. The DRBM domain occupies 161-230 (DPKSRLQEYL…AAEILKLLEQ (70 aa)).

Belongs to the ribonuclease III family. Homodimer. Mg(2+) is required as a cofactor.

The protein resides in the cytoplasm. The catalysed reaction is Endonucleolytic cleavage to 5'-phosphomonoester.. Its function is as follows. Digests double-stranded RNA. Involved in the processing of primary rRNA transcript to yield the immediate precursors to the large and small rRNAs (23S and 16S). Processes some mRNAs, and tRNAs when they are encoded in the rRNA operon. Processes pre-crRNA and tracrRNA of type II CRISPR loci if present in the organism. The protein is Ribonuclease 3 of Acinetobacter baylyi (strain ATCC 33305 / BD413 / ADP1).